The primary structure comprises 68 residues: Acylphosphatase (68 aa).

One can recognise an Acylphosphatase-like domain in the interval 3–68 (RIACTVHGRV…RCTAGLPSAP (66 aa)). Catalysis depends on residues arginine 18 and asparagine 36.

It belongs to the acylphosphatase family.

The enzyme catalyses an acyl phosphate + H2O = a carboxylate + phosphate + H(+). The sequence is that of Acylphosphatase (acyP) from Oleidesulfovibrio alaskensis (strain ATCC BAA-1058 / DSM 17464 / G20) (Desulfovibrio alaskensis).